Reading from the N-terminus, the 132-residue chain is Glycine cleavage system H protein (132 aa).

Residues 24 to 106 (TVRVGITDFA…YGAGWLLDVQ (83 aa)) enclose the Lipoyl-binding domain. K65 bears the N6-lipoyllysine mark.

It belongs to the GcvH family. The glycine cleavage system is composed of four proteins: P, T, L and H. Requires (R)-lipoate as cofactor.

In terms of biological role, the glycine cleavage system catalyzes the degradation of glycine. The H protein shuttles the methylamine group of glycine from the P protein to the T protein. This Mycobacterium avium (strain 104) protein is Glycine cleavage system H protein.